A 349-amino-acid chain; its full sequence is Heparin sulfate O-sulfotransferase (349 aa).

At Met-1–Trp-17 the chain is on the cytoplasmic side. Residues Leu-18 to Ile-38 form a helical; Signal-anchor for type II membrane protein membrane-spanning segment. Topologically, residues Arg-39–Lys-349 are lumenal. Asn-107 and Asn-126 each carry an N-linked (GlcNAc...) asparagine glycan. Residues His-139 and His-141 contribute to the active site. Cystine bridges form between Cys-200/Cys-208 and Cys-221/Cys-227. N-linked (GlcNAc...) asparagine glycosylation is present at Asn-282.

Belongs to the sulfotransferase 3 family. As to quaternary structure, homotrimer.

It is found in the golgi apparatus membrane. Its function is as follows. Catalyzes the transfer of sulfate to the C2-position of selected hexuronic acid residues within the maturing heparan sulfate (HS). This Drosophila melanogaster (Fruit fly) protein is Heparin sulfate O-sulfotransferase.